Here is a 147-residue protein sequence, read N- to C-terminus: Small ribosomal subunit protein bS6 (147 aa).

Residues 114–147 (GKGTRAAEQAAAAEAAAPAAAPAEPASAEPAPAV) are disordered. A compositionally biased stretch (low complexity) spans 119-147 (AAEQAAAAEAAAPAAAPAEPASAEPAPAV).

It belongs to the bacterial ribosomal protein bS6 family.

Its function is as follows. Binds together with bS18 to 16S ribosomal RNA. The polypeptide is Small ribosomal subunit protein bS6 (Koribacter versatilis (strain Ellin345)).